The following is a 172-amino-acid chain: AIG2-like protein C (172 aa).

Tyr-13–Glu-18 is a binding site for substrate. Catalysis depends on Glu-81, which acts as the Proton acceptor.

The protein belongs to the gamma-glutamylcyclotransferase family. In terms of tissue distribution, expressed in flowers, leaves, stems and roots.

Its function is as follows. Putative gamma-glutamylcyclotransferase. The sequence is that of AIG2-like protein C from Arabidopsis thaliana (Mouse-ear cress).